The following is a 493-amino-acid chain: MKIYIDGEWRDSSSGETIKKYNPSTGEVLDTFPAATRNDVDAAIDSAEDAFKRWSDMTSMERSKILYKALELISKDKDQLTDLLIKENGKVKREAMDETEGVIDQLQYYTEFERKLTGDIVEGTSNKRKIFQYKVPYGIVIAITPWNFPAAMVIRKLAPALLTGNTVILKPSSDTPLTAEWLVKKFVDAGIPKGVLNLITGKGSEIGDYIVEHKKVSLITMTGSTSTGQRIMEKASKNMAKLILELGGKAPFMVWKDANIERALKSLVWAKYLNVGQSCIAAERLYIHEDIYDEFMKKFIEVSKRIKLGDPESSDMGPLINKSAVETTEKYVDIARSSGYKILLGGKKPELSGKYKNGYFYEPTIIENVPQDSPLFQEEIFGPVIGAESVSSVDELYEKANDSKYGLASYLFTEDPELIFEASEKIRFGELYVNMPGPEASQGYHTGFRLTGQAGEGSKYGISEYLKLKNVYVDYSRGNLSISTVNDDLFKNL.

Residues 144–147 (TPWN), Arg155, 170–174 (KPSSD), 202–208 (KGSEIGD), 223–246 (GSTS…ILEL), Cys279, and 379–381 (EIF) each bind NADP(+). Asn147 and Arg155 together coordinate substrate. Glu245 acts as the Proton acceptor in catalysis. Cys279 is a binding site for substrate. The active-site Proton donor is Cys279.

Belongs to the aldehyde dehydrogenase family. Glyceraldehyde dehydrogenase subfamily. Homotetramer. Dimer of dimers.

It carries out the reaction D-glyceraldehyde + NADP(+) + H2O = (R)-glycerate + NADPH + 2 H(+). Its pathway is carbohydrate degradation; glycolysis. With respect to regulation, stable for 2 hours at 60 degrees Celsius but activity is decreased to less than 50 percent within 15 minutes at 70 degrees Celsius. Functionally, NADP-dependent dehydrogenase of the nED (non-phosphorylated Entner-Doudoroff) pathway with highest activity towards glyceraldehydes (e.g. D,L-glyceraldehyde and D-glyceraldehyde), to a lesser extent towards D,L-glyceraldehyde-3-phosphate and glycolaldehyde, but no activity towards aliphatic or aromatic aldehydes. The chain is D-glyceraldehyde dehydrogenase (NADP(+)) from Picrophilus torridus (strain ATCC 700027 / DSM 9790 / JCM 10055 / NBRC 100828 / KAW 2/3).